The sequence spans 323 residues: Dehydrogenase/reductase SDR family member 7B (323 aa).

Residues 1–4 (MDLT) lie on the Cytoplasmic side of the membrane. The chain crosses the membrane as a helical; Signal-anchor for type II membrane protein span at residues 5–25 (SWAIFPLLLASIGVYGLYKLL). Over 26–272 (QKLRSGAYLQ…AVGERRKELL (247 aa)) the chain is Lumenal. NAD(+) contacts are provided by Ser46 and Leu48. Residue Ser178 coordinates substrate. NAD(+)-binding residues include Tyr191, Lys195, and Thr226. Tyr191 serves as the catalytic Proton acceptor.

This sequence belongs to the short-chain dehydrogenases/reductases (SDR) family.

The protein resides in the endoplasmic reticulum membrane. In terms of biological role, putative oxidoreductase. The polypeptide is Dehydrogenase/reductase SDR family member 7B (dhrs7b) (Xenopus laevis (African clawed frog)).